A 423-amino-acid polypeptide reads, in one-letter code: MEATAASTSLPDPGDFDRNVPRICGVCGDRATGFHFNAMTCEGCKGFFRRSMKRKALFTCPFNGDCRITKDNRRHCQACRLKRCVDIGMMKEFILTDEEVQRKREMIMKRKEEEALKDSLRPKLSEEQQHIIAILLDAHHKTYDPTYADFRDFRPPVRMDGSTGSYSPRPTLSFSGNSSSSSSDLYTTSLDMMEPSGFSNLDLNGEDSDDPSVTLDLSPLSMLPHLADLVSYSIQKVIGFAKMIPGFRDLTSDDQIVLLKSSAIEVIMLRSNQSFTMDDMSWDCGSQDYKYDVTDVSKAGHTLELIEPLIKFQVGLKKLNLHEEEHVLLMAICIVSPDRPGVQDAKLVEAIQDRLSNTLQTYIRCRHPPPGSHQLYAKMIQKLADLRSLNEEHSKQYRSLSFQPENSMKLTPLVLEVFGNEIS.

Zn(2+) contacts are provided by C24, C27, C41, C44, C60, C66, C76, and C79. 2 NR C4-type zinc fingers span residues 24 to 44 (CGVC…CEGC) and 60 to 84 (CPFN…LKRC). Positions 24-89 (CGVCGDRATG…RLKRCVDIGM (66 aa)) form a DNA-binding region, nuclear receptor. Residues 97-126 (DEEVQRKREMIMKRKEEEALKDSLRPKLSE) are hinge. The NR LBD domain maps to 127 to 419 (EQQHIIAILL…LTPLVLEVFG (293 aa)). Residue Y143 participates in calcitriol binding. Residues 159–180 (MDGSTGSYSPRPTLSFSGNSSS) form a disordered region. A compositionally biased stretch (low complexity) spans 171–180 (TLSFSGNSSS). A calcitriol-binding site is contributed by S233. Residues 242–260 (KMIPGFRDLTSDDQIVLLK) form an interaction with coactivator LXXLL motif region. Calcitriol contacts are provided by R270, S274, H301, and H393. The 9aaTAD signature appears at 412 to 420 (PLVLEVFGN).

This sequence belongs to the nuclear hormone receptor family. NR1 subfamily. As to quaternary structure, homodimer in the absence of bound vitamin D3. Heterodimer with RXRA after vitamin D3 binding. Interacts with MED1 and NCOA6. Interacts with MED1, NCOA1, NCOA2, NCOA3 and NCOA6 coactivators, leading to a strong increase of transcription of target genes. Interacts with the corepressor NCOR1. Interacts with SNW1. Interacts with IRX4, the interaction does not affect its transactivation activity. Interacts with CRY1. Interacts with CRY2 in a ligand-dependent manner. Ubiquitinated by UBR5, leading to its degradation: UBR5 specifically recognizes and binds ligand-bound VDR when it is not associated with coactivators (NCOAs). In presence of NCOAs, the UBR5-degron is not accessible, preventing its ubiquitination and degradation. As to expression, detected in intestine and kidney.

Its subcellular location is the nucleus. It is found in the cytoplasm. In terms of biological role, nuclear receptor for calcitriol, the active form of vitamin D3 which mediates the action of this vitamin on cells. Enters the nucleus upon vitamin D3 binding where it forms heterodimers with the retinoid X receptor/RXR. The VDR-RXR heterodimers bind to specific response elements on DNA and activate the transcription of vitamin D3-responsive target genes. Plays a central role in calcium homeostasis. Also functions as a receptor for the secondary bile acid lithocholic acid (LCA) and its metabolites. This chain is Vitamin D3 receptor (Vdr), found in Rattus norvegicus (Rat).